The following is a 386-amino-acid chain: Palmitoyltransferase ZDHHC9 (386 aa).

Residues 1 to 35 (MSAVMITRKITRKWEKLPGKNTFCCDGRVMMARQK) lie on the Cytoplasmic side of the membrane. The chain crosses the membrane as a helical span at residues 36–56 (GVFYLTLFLIVGTCSLFFAFE). Residues 57–63 (CPYLAVH) lie on the Lumenal side of the membrane. The chain crosses the membrane as a helical span at residues 64–84 (LSPAIPVFAVLLFVFVMAMLL). Topologically, residues 85–183 (RTSFSDPGVL…NCVGKRNYRY (99 aa)) are cytoplasmic. The 51-residue stretch at 139–189 (KYCYTCKIFRPPRASHCSICDNCVDRFDHHCPWVGNCVGKRNYRYFYLFTL) folds into the DHHC domain. Catalysis depends on Cys-169, which acts as the S-palmitoyl cysteine intermediate. The chain crosses the membrane as a helical span at residues 184-204 (FYLFTLSLSLLTIYIFAFDIV). Over 205 to 224 (HVVLRSVDSGFVNTLKETPG) the chain is Lumenal. Residues 225–245 (TVLEVLVCFFTLWSVVGLTGF) form a helical membrane-spanning segment. The Cytoplasmic segment spans residues 246–386 (HTYLISLNQT…APAVIKESTH (141 aa)). Residues 306 to 334 (SCSSAPSNGATTVPVNKSSNPATQTTKSS) show a composition bias toward polar residues. Positions 306 to 386 (SCSSAPSNGA…APAVIKESTH (81 aa)) are disordered.

It belongs to the DHHC palmitoyltransferase family. ERF2/ZDHHC9 subfamily.

Its subcellular location is the endoplasmic reticulum membrane. The protein resides in the golgi apparatus membrane. The enzyme catalyses L-cysteinyl-[protein] + hexadecanoyl-CoA = S-hexadecanoyl-L-cysteinyl-[protein] + CoA. Its function is as follows. Palmitoyltransferase that catalyzes the addition of palmitate onto various protein substrates, such as ADRB2, GSDMD, HRAS, NRAS and CGAS. This is Palmitoyltransferase ZDHHC9 from Danio rerio (Zebrafish).